Reading from the N-terminus, the 223-residue chain is Probable transaldolase (223 aa).

The active-site Schiff-base intermediate with substrate is lysine 86.

The protein belongs to the transaldolase family. Type 3B subfamily.

The protein localises to the cytoplasm. The catalysed reaction is D-sedoheptulose 7-phosphate + D-glyceraldehyde 3-phosphate = D-erythrose 4-phosphate + beta-D-fructose 6-phosphate. It functions in the pathway carbohydrate degradation; pentose phosphate pathway; D-glyceraldehyde 3-phosphate and beta-D-fructose 6-phosphate from D-ribose 5-phosphate and D-xylulose 5-phosphate (non-oxidative stage): step 2/3. Functionally, transaldolase is important for the balance of metabolites in the pentose-phosphate pathway. This Thermoplasma acidophilum (strain ATCC 25905 / DSM 1728 / JCM 9062 / NBRC 15155 / AMRC-C165) protein is Probable transaldolase (tal).